The primary structure comprises 248 residues: MPRKHLIASGINKKQQTQAKLGNKLAKEIKAAAKVGGPNPEANPRLKAAIDKALQNNLSKESIEKNINGSIKDPSSLTDAEYEGYGPNGLRIIIKTLSDNDNRTISSLRGYFSKLKGEIAKPNSVKNSFIYGGEIIISNKDLTEDDLMEKILLSLEKIEVTDNDEPIQETNQHEDCFQIIVMPKYFYKIRQELETLGLKIIESEIKYIPTDYVDLNKEDYARLERFLDSCNEDDDVQWVISNFGEVIE.

This sequence belongs to the TACO1 family.

It is found in the cytoplasm. This chain is Probable transcriptional regulatory protein MYPE8020, found in Malacoplasma penetrans (strain HF-2) (Mycoplasma penetrans).